Here is a 439-residue protein sequence, read N- to C-terminus: Proline--tRNA ligase (439 aa).

Belongs to the class-II aminoacyl-tRNA synthetase family. ProS type 2 subfamily. As to quaternary structure, homodimer.

The protein resides in the cytoplasm. It catalyses the reaction tRNA(Pro) + L-proline + ATP = L-prolyl-tRNA(Pro) + AMP + diphosphate. Functionally, catalyzes the attachment of proline to tRNA(Pro) in a two-step reaction: proline is first activated by ATP to form Pro-AMP and then transferred to the acceptor end of tRNA(Pro). In Beijerinckia indica subsp. indica (strain ATCC 9039 / DSM 1715 / NCIMB 8712), this protein is Proline--tRNA ligase.